The primary structure comprises 482 residues: Thymidine phosphorylase (482 aa).

Residues 1–10 (MAALMTPGTG) constitute a propeptide that is removed on maturation. The disordered stretch occupies residues 1 to 36 (MAALMTPGTGAPPAPGDFSGEGSQGLPDPSPEPKQL). At T6 the chain carries Phosphothreonine. Substrate contacts are provided by H116, R202, S217, and K221. R-V-A-A-A-L-X(5,6)-L-G-R repeat units lie at residues 265–279 (RVAAALTAMDKPLGR) and 329–342 (RVAAALDDGSALGR). 2 R-A-L-X-X-A-L-V-L repeats span residues 393 to 401 (RALPLALVL) and 453 to 461 (RALQEALVL).

Belongs to the thymidine/pyrimidine-nucleoside phosphorylase family. In terms of assembly, homodimer.

It carries out the reaction thymidine + phosphate = 2-deoxy-alpha-D-ribose 1-phosphate + thymine. It functions in the pathway pyrimidine metabolism; dTMP biosynthesis via salvage pathway; dTMP from thymine: step 1/2. Its function is as follows. May have a role in maintaining the integrity of the blood vessels. Has growth promoting activity on endothelial cells, angiogenic activity in vivo and chemotactic activity on endothelial cells in vitro. In terms of biological role, catalyzes the reversible phosphorolysis of thymidine. The produced molecules are then utilized as carbon and energy sources or in the rescue of pyrimidine bases for nucleotide synthesis. The chain is Thymidine phosphorylase from Homo sapiens (Human).